The sequence spans 972 residues: Isoleucine--tRNA ligase (972 aa).

The 'HIGH' region motif lies at 63–73 (PYANGNIHIGH). Glutamate 603 serves as a coordination point for L-isoleucyl-5'-AMP. Positions 644–648 (KMSKS) match the 'KMSKS' region motif. Lysine 647 lines the ATP pocket.

Belongs to the class-I aminoacyl-tRNA synthetase family. IleS type 1 subfamily. As to quaternary structure, monomer.

The protein resides in the cytoplasm. The catalysed reaction is tRNA(Ile) + L-isoleucine + ATP = L-isoleucyl-tRNA(Ile) + AMP + diphosphate. Its function is as follows. Catalyzes the attachment of isoleucine to tRNA(Ile). As IleRS can inadvertently accommodate and process structurally similar amino acids such as valine, to avoid such errors it has two additional distinct tRNA(Ile)-dependent editing activities. One activity is designated as 'pretransfer' editing and involves the hydrolysis of activated Val-AMP. The other activity is designated 'posttransfer' editing and involves deacylation of mischarged Val-tRNA(Ile). The polypeptide is Isoleucine--tRNA ligase (Brucella suis biovar 1 (strain 1330)).